The following is a 160-amino-acid chain: Transcription elongation factor GreA (160 aa).

Positions 1 to 72 form a coiled coil; the sequence is MAEKTYPMTL…QISSLETKIR (72 aa).

It belongs to the GreA/GreB family.

Necessary for efficient RNA polymerase transcription elongation past template-encoded arresting sites. The arresting sites in DNA have the property of trapping a certain fraction of elongating RNA polymerases that pass through, resulting in locked ternary complexes. Cleavage of the nascent transcript by cleavage factors such as GreA or GreB allows the resumption of elongation from the new 3'terminus. GreA releases sequences of 2 to 3 nucleotides. This chain is Transcription elongation factor GreA, found in Streptococcus pneumoniae (strain ATCC 700669 / Spain 23F-1).